The following is a 213-amino-acid chain: Cytochrome b-c1 complex subunit Rieske, mitochondrial (213 aa).

The N-terminal 29 residues, 1–29, are a transit peptide targeting the mitochondrion; sequence MSSLAFRTLRNGLGLKSSVRALSTTTTTL. Over 30–47 the chain is Mitochondrial matrix; sequence SNYQQPDYSSYLNNKSGQ. A helical transmembrane segment spans residues 48–77; it reads GSRNFTYFMVGSMGLLSAAGAKSTVEAFLS. The Mitochondrial intermembrane portion of the chain corresponds to 78-213; that stretch reads SFAASADVLA…FTDDETLLVG (136 aa). In terms of domain architecture, Rieske spans 116-211; sequence RHRTADEIEE…YDFTDDETLL (96 aa). Residues Cys156, His158, Cys175, and His178 each coordinate [2Fe-2S] cluster. Cys161 and Cys177 form a disulfide bridge.

Belongs to the Rieske iron-sulfur protein family. In terms of assembly, component of the ubiquinol-cytochrome c oxidoreductase (cytochrome b-c1 complex, complex III, CIII), a multisubunit enzyme composed of 10 subunits. The complex is composed of 3 respiratory subunits cytochrome b (COB), cytochrome c1 (CYT1) and Rieske protein (RIP1), 2 core protein subunits COR1 and QCR2, and 5 low-molecular weight protein subunits QCR6, QCR7, QCR8, QCR9 and QCR10. The complex exists as an obligatory dimer and forms supercomplexes (SCs) in the inner mitochondrial membrane with a monomer or a dimer of cytochrome c oxidase (complex IV, CIV), resulting in 2 different assemblies (supercomplexes III(2)IV and III(2)IV(2)). [2Fe-2S] cluster is required as a cofactor.

It localises to the mitochondrion inner membrane. It catalyses the reaction a quinol + 2 Fe(III)-[cytochrome c](out) = a quinone + 2 Fe(II)-[cytochrome c](out) + 2 H(+)(out). Its function is as follows. Component of the ubiquinol-cytochrome c oxidoreductase, a multisubunit transmembrane complex that is part of the mitochondrial electron transport chain which drives oxidative phosphorylation. The complex plays an important role in the uptake of multiple carbon sources present in different host niches. This chain is Cytochrome b-c1 complex subunit Rieske, mitochondrial, found in Candida albicans (strain SC5314 / ATCC MYA-2876) (Yeast).